A 149-amino-acid chain; its full sequence is Secreted RxLR effector protein 47 (149 aa).

An N-terminal signal peptide occupies residues 1–22; that stretch reads MICLLPLIAVMLFVFATHTVLA. The RxLR-dEER signature appears at 57–79; the sequence is RFLRQETTFEEKPSVNDVHAEER.

It belongs to the RxLR effector family.

It localises to the secreted. The protein resides in the host membrane. Functionally, secreted effector that completely suppresses the host cell death induced by cell death-inducing proteins. This chain is Secreted RxLR effector protein 47, found in Plasmopara viticola (Downy mildew of grapevine).